The primary structure comprises 147 residues: Hemoglobin anodic subunit beta (147 aa).

The Globin domain occupies Glu-2 to His-147. Residues His-63 and His-92 each contribute to the heme b site.

This sequence belongs to the globin family. Heterotetramer of two alpha chains and two beta chains. As to expression, red blood cells.

In terms of biological role, involved in oxygen transport from gills to the various peripheral tissues. This chain is Hemoglobin anodic subunit beta, found in Gymnothorax unicolor (Brown moray).